We begin with the raw amino-acid sequence, 358 residues long: Aminomethyltransferase (358 aa).

It belongs to the GcvT family. In terms of assembly, the glycine cleavage system is composed of four proteins: P, T, L and H.

The catalysed reaction is N(6)-[(R)-S(8)-aminomethyldihydrolipoyl]-L-lysyl-[protein] + (6S)-5,6,7,8-tetrahydrofolate = N(6)-[(R)-dihydrolipoyl]-L-lysyl-[protein] + (6R)-5,10-methylene-5,6,7,8-tetrahydrofolate + NH4(+). Its function is as follows. The glycine cleavage system catalyzes the degradation of glycine. The polypeptide is Aminomethyltransferase (Francisella tularensis subsp. mediasiatica (strain FSC147)).